The chain runs to 2259 residues: Protein Ycf2 (2259 aa).

1556–1563 is a binding site for ATP; that stretch reads GSQETGRS.

The protein belongs to the Ycf2 family.

The protein resides in the plastid. It is found in the chloroplast stroma. In terms of biological role, probable ATPase of unknown function. Its presence in a non-photosynthetic plant (Epifagus virginiana) and experiments in tobacco indicate that it has an essential function which is probably not related to photosynthesis. The sequence is that of Protein Ycf2 from Physcomitrium patens (Spreading-leaved earth moss).